Reading from the N-terminus, the 387-residue chain is 3-ketoacyl-CoA thiolase (387 aa).

Residue Cys91 is the Acyl-thioester intermediate of the active site. Catalysis depends on proton acceptor residues His343 and Cys373.

It belongs to the thiolase-like superfamily. Thiolase family. Heterotetramer of two alpha chains (FadB) and two beta chains (FadA).

It localises to the cytoplasm. It catalyses the reaction an acyl-CoA + acetyl-CoA = a 3-oxoacyl-CoA + CoA. It participates in lipid metabolism; fatty acid beta-oxidation. Functionally, catalyzes the final step of fatty acid oxidation in which acetyl-CoA is released and the CoA ester of a fatty acid two carbons shorter is formed. In Escherichia coli O1:K1 / APEC, this protein is 3-ketoacyl-CoA thiolase.